The following is a 346-amino-acid chain: KH domain-containing, RNA-binding, signal transduction-associated protein 3 (346 aa).

Residues 1-160 (MEEKYLPELM…IKKFLIPDYN (160 aa)) are involved in homodimerization. Lysine 4 is covalently cross-linked (Glycyl lysine isopeptide (Lys-Gly) (interchain with G-Cter in SUMO2)). The region spanning 61 to 127 (LIPVKQFPKF…AKYFHLNDDL (67 aa)) is the KH domain. Disordered stretches follow at residues 212-266 (RPVA…QETY) and 317-346 (GQEE…YGRY). The span at 253–262 (GYRPPPPPPT) shows a compositional bias: pro residues.

This sequence belongs to the KHDRBS family. As to quaternary structure, self-associates to form homooligomers; dimerization increases RNA affinity. Interacts with KHDRBS2/SLM-1. Interacts with KHDRBS1/SAM68; heterooligomer formation of KHDRBS family proteins may modulate RNA substrate specificity. Interacts with the splicing regulatory proteins SFRS9, SAFB and YTHDC1. Interacts with HNRPL, RBMX, p85 subunit of PI3-kinase, SERPINB5. Phosphorylated on tyrosine residues by PTK6. In terms of tissue distribution, highly expressed in testis and brain. In adult cerebellum expressed predominantly in internal granular layer interneurons and in hippocampus is exclusively expressed in CA neurons; expression is restricted to neuronal subpopulations largely non-overlapping with expression of KHDRBS2/SLM-1.

It localises to the nucleus. Its function is as follows. RNA-binding protein that plays a role in the regulation of alternative splicing and influences mRNA splice site selection and exon inclusion. Binds preferentially to the 5'-[AU]UAAA-3' motif in vitro. Binds optimally to RNA containing 5'-[AU]UAA-3' as a bipartite motif spaced by more than 15 nucleotides. Binds poly(A). RNA-binding abilities are down-regulated by tyrosine kinase PTK6. Involved in splice site selection of vascular endothelial growth factor. In vitro regulates CD44 alternative splicing by direct binding to purine-rich exonic enhancer. Can regulate alternative splicing of neurexins NRXN1-3 in the laminin G-like domain 6 containing the evolutionary conserved neurexin alternative spliced segment 4 (AS4) involved in neurexin selective targeting to postsynaptic partners such as neuroligins and LRRTM family members. High concentrations in forebrain structures block splicing inclusion of NRXN1-3 AS4 exons while low concentrations favor their inclusion. Targeted, cell-type specific splicing regulation of NRXN1 at AS4 is involved in neuronal glutamatergic synapse function and plasticity and is linked to behavioral aspects. Regulates expression of KHDRBS2/SLIM-1 in defined neuron populations in the hippocampus by modifying its alternative splicing resulting in a transcript predicted to undergo nonsense-mediated decay. Can bind FABP9 mRNA. May play a role as a negative regulator of cell growth. Inhibits cell proliferation. This chain is KH domain-containing, RNA-binding, signal transduction-associated protein 3 (Khdrbs3), found in Mus musculus (Mouse).